We begin with the raw amino-acid sequence, 343 residues long: Uroporphyrinogen decarboxylase (343 aa).

Substrate contacts are provided by residues 25–29, Phe44, Asp75, Tyr150, Ser205, and His320; that span reads RQAGR.

This sequence belongs to the uroporphyrinogen decarboxylase family. In terms of assembly, homodimer.

It is found in the cytoplasm. It carries out the reaction uroporphyrinogen III + 4 H(+) = coproporphyrinogen III + 4 CO2. Its pathway is porphyrin-containing compound metabolism; protoporphyrin-IX biosynthesis; coproporphyrinogen-III from 5-aminolevulinate: step 4/4. Its function is as follows. Catalyzes the decarboxylation of four acetate groups of uroporphyrinogen-III to yield coproporphyrinogen-III. The chain is Uroporphyrinogen decarboxylase from Mesorhizobium japonicum (strain LMG 29417 / CECT 9101 / MAFF 303099) (Mesorhizobium loti (strain MAFF 303099)).